Reading from the N-terminus, the 445-residue chain is Proline--tRNA ligase (445 aa).

This sequence belongs to the class-II aminoacyl-tRNA synthetase family. ProS type 2 subfamily. In terms of assembly, homodimer.

It is found in the cytoplasm. The enzyme catalyses tRNA(Pro) + L-proline + ATP = L-prolyl-tRNA(Pro) + AMP + diphosphate. Catalyzes the attachment of proline to tRNA(Pro) in a two-step reaction: proline is first activated by ATP to form Pro-AMP and then transferred to the acceptor end of tRNA(Pro). The chain is Proline--tRNA ligase from Dinoroseobacter shibae (strain DSM 16493 / NCIMB 14021 / DFL 12).